Consider the following 189-residue polypeptide: Thioredoxin-like protein CITRX, chloroplastic (189 aa).

The transit peptide at 1-36 directs the protein to the chloroplast; it reads MAMAAAASLLPACAAPTLPGRAFRPRRNSTPTASLS. One can recognise a Thioredoxin domain in the interval 72–189; sequence GSGKYIAPDY…MIRNIIDNEL (118 aa). Catalysis depends on nucleophile residues cysteine 112 and cysteine 115. Cysteine 112 and cysteine 115 are disulfide-bonded.

Belongs to the thioredoxin family. Plant CITRX-type subfamily.

It localises to the plastid. The protein localises to the chloroplast. Probable thiol-disulfide oxidoreductase that may play a role in proper chloroplast development. The protein is Thioredoxin-like protein CITRX, chloroplastic of Oryza sativa subsp. indica (Rice).